A 744-amino-acid chain; its full sequence is Zinc finger protein 366 (744 aa).

The disordered stretch occupies residues 206 to 228 (KQPPEPLLPRKAEPQESEETKQK). The segment covering 213–228 (LPRKAEPQESEETKQK) has biased composition (basic and acidic residues). 11 C2H2-type zinc fingers span residues 253–275 (WQCPTCEKSYTSKYNLVTHILGH), 281–303 (HACTHCGKLFKQLSHLHTHMLTH), 309–331 (HKCQVCHKAFTQTSHLKRHMMQH), 337–359 (HNCRVCGRGFAYPSELKAHEAKH), 365–387 (NICVECGLDFPTLAQLKRHLTTH), 393–415 (YNCSECDKTFQYPSQLQNHMMKH), 421–443 (YICSECGMEFVQPHHLKQHSLTH), 449–471 (HKCGICGREFTLLANMKRHVLIH), 477–499 (YQCHLCYKSFVQKQTLKAHMIVH), 505–527 (FKCKLCGKEFNRMHNLMGHMHLH), and 533–556 (FKCLYCPSKFTLKGNLTRHMKVKH). Positions 455–744 (GREFTLLANM…MEKQAVLLGI (290 aa)) are interaction with NRIP1. A PXDLS motif is present at residues 590 to 594 (PFDLS). Disordered stretches follow at residues 603–627 (VFQSDGESAQGSHCHEEEEEDNCYE) and 664–692 (KEEKEDASKGEWEKRSKGDLGAEGGQERD).

In terms of assembly, interacts with ESR1 and NRIP1. Interacts (via PXDLS motif) with CTBP1. Expressed in immature and mature dendritic cells (DCs). Not detected in other blood cell types.

It is found in the nucleus. Its function is as follows. Has transcriptional repression activity. Acts as a corepressor of ESR1; the function seems to involve CTBP1 and histone deacetylases. The protein is Zinc finger protein 366 of Homo sapiens (Human).